An 82-amino-acid chain; its full sequence is Progonadoliberin-3 (82 aa).

The first 23 residues, 1–23 (MDLSNRTVVQVVVLALVAQVTLS), serve as a signal peptide directing secretion. Glutamine 24 carries the post-translational modification Pyrrolidone carboxylic acid. Residue glycine 33 is modified to Glycine amide.

This sequence belongs to the GnRH family. In terms of tissue distribution, brain.

The protein resides in the secreted. Stimulates the secretion of gonadotropins. This Oncorhynchus nerka (Sockeye salmon) protein is Progonadoliberin-3 (gnrh3).